Here is a 219-residue protein sequence, read N- to C-terminus: tRNA (guanine-N(7)-)-methyltransferase (219 aa).

S-adenosyl-L-methionine contacts are provided by E46, E71, N100, and D122. D122 is an active-site residue. Substrate contacts are provided by residues K126, D158, and 199–202 (TEYE).

Belongs to the class I-like SAM-binding methyltransferase superfamily. TrmB family.

The enzyme catalyses guanosine(46) in tRNA + S-adenosyl-L-methionine = N(7)-methylguanosine(46) in tRNA + S-adenosyl-L-homocysteine. It functions in the pathway tRNA modification; N(7)-methylguanine-tRNA biosynthesis. Its function is as follows. Catalyzes the formation of N(7)-methylguanine at position 46 (m7G46) in tRNA. The polypeptide is tRNA (guanine-N(7)-)-methyltransferase (Leuconostoc citreum (strain KM20)).